We begin with the raw amino-acid sequence, 373 residues long: Peroxisomal biogenesis factor 3 (373 aa).

Topologically, residues 1–15 (MLRSVWNFLKRHKKK) are cytoplasmic. The segment at 1 to 45 (MLRSVWNFLKRHKKKCIFLGTVLGGVYILGKYGQKKIREIQEREA) is targeting to peroxisomes. Residues 16–36 (CIFLGTVLGGVYILGKYGQKK) traverse the membrane as a helical segment. Over 37–116 (IREIQEREAA…LKIISFTRST (80 aa)) the chain is Peroxisomal. The helical transmembrane segment at 117–140 (VAVYSTCMLVVLLRVQLNIIGGYI) threads the bilayer. The interaction with PEX19 stretch occupies residues 120 to 136 (YSTCMLVVLLRVQLNII). Topologically, residues 141–373 (YLDNAAVGKN…AFSTPQQLEK (233 aa)) are cytoplasmic.

It belongs to the peroxin-3 family. Interacts with PEX19. Found in all examined tissues.

It is found in the peroxisome membrane. In terms of biological role, involved in peroxisome biosynthesis and integrity. Assembles membrane vesicles before the matrix proteins are translocated. As a docking factor for PEX19, is necessary for the import of peroxisomal membrane proteins in the peroxisomes. The chain is Peroxisomal biogenesis factor 3 (PEX3) from Homo sapiens (Human).